Here is a 1772-residue protein sequence, read N- to C-terminus: Putative stereocilin-like protein (1772 aa).

Residues 1-25 (MALSLWPLLLLLLLLLLLSFAVTLA) form the signal peptide. 4 N-linked (GlcNAc...) asparagine glycosylation sites follow: Asn65, Asn427, Asn476, and Asn565.

The protein belongs to the stereocilin family.

The protein resides in the secreted. This chain is Putative stereocilin-like protein (STRCP1), found in Homo sapiens (Human).